The sequence spans 510 residues: Probable RNA-binding protein 46 (510 aa).

Residues 23–42 (ENGQRKFGGPPPGWEGPPPP) are disordered. Residues 31-42 (GPPPGWEGPPPP) show a composition bias toward pro residues. RRM domains lie at 45 to 123 (REVF…VSLD), 125 to 207 (CRLF…WAEP), and 220 to 292 (RVLY…LAKP).

As to expression, expressed in the testis and ovary.

The protein localises to the cytoplasm. Functionally, essential for male and female fertility, playing a crucial role in regulating germ cell development by ensuring the proper progression of meiosis prophase I. The chain is Probable RNA-binding protein 46 (rbm46) from Danio rerio (Zebrafish).